We begin with the raw amino-acid sequence, 151 residues long: Leukocyte cell-derived chemotaxin-2 (151 aa).

A signal peptide spans 1–18 (MFSTKALLLAGLISTALA). 3 cysteine pairs are disulfide-bonded: Cys-25/Cys-60, Cys-36/Cys-41, and Cys-99/Cys-142. His-53, Asp-57, and His-138 together coordinate Zn(2+).

It belongs to the LECT2/MIM-1 family. As to quaternary structure, interacts with MET. In terms of tissue distribution, highly expressed in adult and fetal liver and weakly in testis. Not expressed in bone marrow.

The protein localises to the cytoplasm. It localises to the secreted. Its function is as follows. Has a neutrophil chemotactic activity. Also a positive regulator of chondrocyte proliferation. Does not show metalloendopeptidase activity. The sequence is that of Leukocyte cell-derived chemotaxin-2 (LECT2) from Homo sapiens (Human).